The sequence spans 962 residues: Translation initiation factor IF-2 (962 aa).

The interval 99-366 is disordered; that stretch reads VKAAQTQAAP…KKGKKLKLEP (268 aa). Residues 117–141 are compositionally biased toward basic and acidic residues; the sequence is DAAKARAEAAARAEARAKAEAEAAK. The span at 145 to 155 shows a compositional bias: low complexity; that stretch reads AKAGNKAKPAA. Positions 173–216 are enriched in basic and acidic residues; the sequence is KPAEESKAEKAQADKMPSEKPAEPKEKAAKPKHERNGKGKDAKK. The span at 219 to 234 shows a compositional bias: low complexity; sequence KPAAPAVPQPVVSAEE. Residues 235–269 are compositionally biased toward basic and acidic residues; sequence QAQRDEEARRAAALRAHQEALLKEKQERQARREAM. Over residues 270-283 the composition is skewed to low complexity; that stretch reads KQQAEQQAKAAQEA. Basic and acidic residues-rich tracts occupy residues 314 to 327 and 338 to 354; these read AKKEDRRNRDDEGQ and GGRDRNNARNGDDERVR. The 170-residue stretch at 462-631 folds into the tr-type G domain; that stretch reads PRPPVVTVMG…LLEAEVLELT (170 aa). Positions 471 to 478 are G1; that stretch reads GHVDHGKT. 471–478 is a binding site for GTP; it reads GHVDHGKT. Residues 496-500 form a G2 region; the sequence is GITQH. The segment at 517 to 520 is G3; that stretch reads DTPG. GTP-binding positions include 517–521 and 571–574; these read DTPGH and NKID. Residues 571 to 574 are G4; the sequence is NKID. The segment at 607–609 is G5; the sequence is SAK.

Belongs to the TRAFAC class translation factor GTPase superfamily. Classic translation factor GTPase family. IF-2 subfamily.

Its subcellular location is the cytoplasm. Functionally, one of the essential components for the initiation of protein synthesis. Protects formylmethionyl-tRNA from spontaneous hydrolysis and promotes its binding to the 30S ribosomal subunits. Also involved in the hydrolysis of GTP during the formation of the 70S ribosomal complex. The polypeptide is Translation initiation factor IF-2 (Neisseria meningitidis serogroup B (strain ATCC BAA-335 / MC58)).